The chain runs to 411 residues: uncharacterized protein (411 aa).

Disordered stretches follow at residues 1–91 and 253–280; these read METP…QDEE and KGPL…AYSP. Residues 46 to 57 show a composition bias toward acidic residues; the sequence is ETTESADSENDM. The span at 74–86 shows a compositional bias: low complexity; the sequence is SNESFSSNQSTES. The span at 258–272 shows a compositional bias: basic and acidic residues; it reads RRNEEDENKPQEKRP. At Ser279 the chain carries Phosphoserine.

Widely expressed, highest levels in cerebellum, brain cortex, hippocampus, pons, putamen and amygdala. Highly expressed in neurons, but also present in glial cells. Slightly higher expression in the dorsolateral prefrontal cortex of schizophrenic patients compared to control individuals.

It is found in the cytoplasm. This is an uncharacterized protein from Homo sapiens (Human).